The following is a 500-amino-acid chain: Perfringolysin O (500 aa).

A signal peptide spans 1–28; that stretch reads MIRFKKTKLIASIAMALCLFSQPVISFS. The next 4 membrane-spanning stretches (beta stranded) occupy residues 189-202, 209-218, 287-296, and 304-316; these read KSQISSALNVNAKV, VDFNAVANNE, SKDVQAAFKA, and KNSQQYKDIYENS. A Conserved undecapeptide motif is present at residues 458–468; sequence ECTGLAWEWWR. The short motif at 490 to 491 is the Cholesterol binding element; the sequence is TL.

Belongs to the cholesterol-dependent cytolysin family. As to quaternary structure, modeling based on cryo-EM shows a homooligomeric pore complex containing 38-44 subunits; when inserted in the host membrane.

It is found in the secreted. The protein resides in the host cell membrane. Functionally, a cholesterol-dependent toxin that causes cytolysis by forming pores in cholesterol-containing host membranes. After binding to target membranes, the protein assembles into a pre-pore complex. A major conformational change leads to insertion in the host membrane and formation of an oligomeric pore complex. Cholesterol is required for binding to host cell membranes, membrane insertion and pore formation; cholesterol binding is mediated by a Thr-Leu pair in the C-terminus. Can be reversibly inactivated by oxidation. This chain is Perfringolysin O (pfo), found in Clostridium perfringens (strain 13 / Type A).